The sequence spans 933 residues: Progesterone receptor (933 aa).

The tract at residues 1–164 (MTELKAKGPR…PATQGVLSPL (164 aa)) is AF3; mediates transcriptional activation. The tract at residues 1-256 (MTELKAKGPR…AAAGGGAAAV (256 aa)) is disordered. The modulating, Pro-Rich stretch occupies residues 1 to 566 (MTELKAKGPR…YSFESLPQKI (566 aa)). Serine 20 is subject to Phosphoserine. An LXXL motif 1 motif is present at residues 55-59 (LDGLL). Serine 81 bears the Phosphoserine mark. The LXXL motif 2 motif lies at 115-119 (LDTLL). Residues serine 130 and serine 162 each carry the phosphoserine modification. A mediates transcriptional transrepression region spans residues 165–305 (MSRSGCKAGD…LATTMMDFIH (141 aa)). Residues 183–187 (KVLPR) carry the Nuclear localization signal motif. A phosphoserine mark is found at serine 190 and serine 213. A compositionally biased stretch (acidic residues) spans 220–231 (EVEEEDGSESEE). Residues 232 to 246 (SAGPLLKGKPRALGG) show a composition bias toward low complexity. Phosphoserine; by MAPK1 is present on serine 294. Residues 331-378 (GGAGAASAFAPPRSSPSASSTPVAVGDFPDCAYPPDAEPKDDAYPLYS) form a disordered region. Low complexity predominate over residues 335-350 (AASAFAPPRSSPSASS). Serine 345 bears the Phosphoserine; by MAPK mark. Lysine 388 is covalently cross-linked (Glycyl lysine isopeptide (Lys-Gly) (interchain with G-Cter in SUMO); alternate). A Glycyl lysine isopeptide (Lys-Gly) (interchain with G-Cter in ubiquitin); alternate cross-link involves residue lysine 388. At serine 400 the chain carries Phosphoserine; by CDK2. A disordered region spans residues 415–452 (PDFPLGPPPPLPPRAPPSRPGEAAVTAAPASASVSSAS). Residues 418 to 433 (PLGPPPPLPPRAPPSR) are compositionally biased toward pro residues. Over residues 434–452 (PGEAAVTAAPASASVSSAS) the composition is skewed to low complexity. The interval 456 to 546 (STLECILYKA…VYPPYLNYLR (91 aa)) is AF1; mediates transcriptional activation. Residue lysine 531 forms a Glycyl lysine isopeptide (Lys-Gly) (interchain with G-Cter in SUMO) linkage. 2 NR C4-type zinc fingers span residues 567-587 (CLIC…CGSC) and 603-627 (CAGR…LRKC). Positions 567–639 (CLICGDEASG…AGMVLGGRKF (73 aa)) form a DNA-binding region, nuclear receptor. Serine 676 is subject to Phosphoserine. An NR LBD domain is found at 679-913 (QDIQLIPPLI…EFPEMMSEVI (235 aa)). Residues 687-933 (LINLLMSIEP…MVKPLLFHKK (247 aa)) are AF2; mediates transcriptional activation. Residue arginine 766 participates in progesterone binding.

The protein belongs to the nuclear hormone receptor family. Interacts with SMARD1 and UNC45A. Interacts with CUEDC2; the interaction promotes ubiquitination, decreases sumoylation, and represses transcriptional activity. Interacts with PIAS3; the interaction promotes sumoylation of PR in a hormone-dependent manner, inhibits DNA-binding, and alters nuclear export. Interacts with SP1; the interaction requires ligand-induced phosphorylation on Ser-345 by ERK1/2-MAPK. Interacts with PRMT2. Interacts with NCOA2 and NCOA1. Interacts with KLF9. Interacts with GTF2B. In terms of processing, phosphorylated on multiple serine sites. Several of these sites are hormone-dependent. Phosphorylation on Ser-294 is highly hormone-dependent and modulates ubiquitination and sumoylation on Lys-388. Phosphorylation on Ser-102 and Ser-345 also requires induction by hormone. Basal phosphorylation on Ser-81, Ser-162, Ser-190 and Ser-400 is increased in response to progesterone and can be phosphorylated in vitro by the CDK2-A1 complex. Increased levels of phosphorylation on Ser-400 also in the presence of EGF, heregulin, IGF, PMA and FBS. Phosphorylation at this site by CDK2 is ligand-independent, and increases nuclear translocation and transcriptional activity. Phosphorylation at Ser-162 and Ser-294, but not at Ser-190, is impaired during the G(2)/M phase of the cell cycle. Phosphorylation on Ser-345 by ERK1/2 MAPK is required for interaction with SP1. Post-translationally, sumoylation is hormone-dependent and represses transcriptional activity. Sumoylation on all three sites is enhanced by PIAS3. Desumoylated by SENP1. Sumoylation on Lys-388, the main site of sumoylation, is repressed by ubiquitination on the same site, and modulated by phosphorylation at Ser-294. Ubiquitination is hormone-dependent and represses sumoylation on the same site. Promoted by MAPK-mediated phosphorylation on Ser-294. Ubiquitinated by UBR5, leading to its degradation: UBR5 specifically recognizes and binds ligand-bound PGR when it is not associated with coactivators (NCOAs). In presence of NCOAs, the UBR5-degron is not accessible, preventing its ubiquitination and degradation. In terms of processing, palmitoylated by ZDHHC7 and ZDHHC21. Palmitoylation is required for plasma membrane targeting and for rapid intracellular signaling via ERK and AKT kinases and cAMP generation.

It localises to the nucleus. The protein localises to the cytoplasm. Its function is as follows. The steroid hormones and their receptors are involved in the regulation of eukaryotic gene expression and affect cellular proliferation and differentiation in target tissues. Transcriptional activator of several progesteron-dependent promoters in a variety of cell types. Involved in activation of SRC-dependent MAPK signaling on hormone stimulation. In Pan paniscus (Pygmy chimpanzee), this protein is Progesterone receptor (PGR).